We begin with the raw amino-acid sequence, 1307 residues long: Histone-lysine N-methyltransferase SETDB1 (1307 aa).

Residues 30–65 (VEELGISMEELRQYIDEELEKMDCIQQRKKQLAELE) adopt a coiled-coil conformation. Phosphoserine is present on residues serine 112 and serine 117. At threonine 120 the chain carries Phosphothreonine. Residues 127-148 (DEDDDVLSIDSGDAGSRTPKDQ) are disordered. Lysine 182 is covalently cross-linked (Glycyl lysine isopeptide (Lys-Gly) (interchain with G-Cter in SUMO2); alternate). A Glycyl lysine isopeptide (Lys-Gly) (interchain with G-Cter in ubiquitin); alternate cross-link involves residue lysine 182. 2 Tudor domains span residues 257 to 320 (KLFV…LKKT) and 347 to 403 (LLKS…SMKT). Disordered regions lie at residues 404–424 (SSASAMEKKQGGQLRTRPNMG), 444–512 (IQFK…TLSE), and 531–570 (SVTSTPASAAPPVPPVPPGPPTPPGPPAPPGPLAPPAFHG). A compositionally biased stretch (pro residues) spans 454–467 (PIAPPAPLPIPPLS). A compositionally biased stretch (polar residues) spans 476–494 (ESQLAQSRKQVAKKSTSFR). The segment covering 495 to 512 (PGSVGSGHSSPTSSTLSE) has biased composition (low complexity). Residues 539–565 (AAPPVPPVPPGPPTPPGPPAPPGPLAP) are compositionally biased toward pro residues. The region spanning 611-682 (YRGKNPLLVP…EMFCLDPYVL (72 aa)) is the MBD domain. The 74-residue stretch at 744 to 817 (VGCDCKDGCR…MCTNRLVQHG (74 aa)) folds into the Pre-SET domain. The Zn(2+) site is built by cysteine 746, cysteine 748, cysteine 752, cysteine 758, cysteine 760, cysteine 798, cysteine 802, cysteine 804, and cysteine 809. The region spanning 820-1282 (VRLQLFKTQN…AGTELTWDYN (463 aa)) is the SET domain. S-adenosyl-L-methionine-binding positions include 830-832 (KGW), aspartate 868, and tyrosine 870. Lysine 884 participates in a covalent cross-link: Glycyl lysine isopeptide (Lys-Gly) (interchain with G-Cter in ubiquitin). Positions 885–1174 (EGYESDVPTS…KNLSGPTKRQ (290 aa)) are disordered. Acidic residues predominate over residues 913–924 (EDPEESNDDSSD). Over residues 950–966 (GQKENELSEMTSKDSRP) the composition is skewed to basic and acidic residues. Residue serine 1042 is modified to Phosphoserine. Positions 1048 to 1066 (FKDEGDNKQPKKEDPENRN) are enriched in basic and acidic residues. Lysine 1049 is covalently cross-linked (Glycyl lysine isopeptide (Lys-Gly) (interchain with G-Cter in SUMO2); alternate). A Glycyl lysine isopeptide (Lys-Gly) (interchain with G-Cter in SUMO1); alternate cross-link involves residue lysine 1049. Residues lysine 1055 and lysine 1085 each participate in a glycyl lysine isopeptide (Lys-Gly) (interchain with G-Cter in SUMO2) cross-link. Residues 1097-1112 (SVLQSQRVVTSTQSNP) show a composition bias toward polar residues. The segment covering 1116 to 1131 (LTLSSSTESEGESGTS) has biased composition (low complexity). A compositionally biased stretch (polar residues) spans 1137-1156 (GHTSATAVDSDDIQTISSGS). A Glycyl lysine isopeptide (Lys-Gly) (interchain with G-Cter in SUMO2) cross-link involves residue lysine 1165. 2 positions are modified to N6,N6,N6-trimethyllysine; alternate: lysine 1186 and lysine 1194. Lysine 1186 and lysine 1194 each carry N6,N6-dimethyllysine; alternate. S-adenosyl-L-methionine-binding positions include arginine 1236 and 1239-1240 (NH). 4 residues coordinate Zn(2+): cysteine 1242, cysteine 1295, cysteine 1297, and cysteine 1302. A Post-SET domain is found at 1291–1307 (KELLCCCGAIECRGRLL).

This sequence belongs to the class V-like SAM-binding methyltransferase superfamily. Histone-lysine methyltransferase family. Suvar3-9 subfamily. In terms of assembly, part of a complex containing at least CDYL, REST, WIZ, SETDB1, EHMT1 and EHMT2. Forms a complex with ATRX, TRIM28 and ZNF274. Probably part of a corepressor complex containing ZNF304, TRIM28, SETDB1 and DNMT1. Interacts with TRIM28/TIF1B. Interacts with ATF7IP and ATF7IP2; the interaction with ATF7IP is required to stimulate histone methyltransferase activity and facilitate the conversion of dimethylated to trimethylated H3 'Lys-9'. Interacts with MBD1; interaction is abolished when MBD1 is sumoylated. Interacts with CBX1 and CBX5. Interacts with DNMT3A and DNMT3B. Interacts with SUMO2. Interacts with MPHOSPH8. Interacts with ERG. Interacts with HDAC1, HDAC2, SIN3A, SIN3B. Interacts with ATRX. Interacts with RESF1. Interacts with ZNF638. Interacts with TASOR. Interacts with ZNF263; recruited to the SIX3 promoter along with other proteins involved in chromatin modification and transcriptional corepression where it contributes to transcriptional repression. Interacts with PHF13; the interaction probably enhances SETDB1 chromatin-associated levels and activity. Interacts with VRK1. In terms of processing, degraded by the proteasome, shielded by interaction with ATF7IP. Post-translationally, monoubiquitinated at Lys-884 by E2 enzymes UBE2E family. The conjugated-Ub is protected from deubiquitination through the SET domain. Monoubiquitination at Lys-884 is required for catalytic activity and H3K9 methylation and endogenous retrovirus silencing. As to expression, ubiquitously expressed. Strong expression in liver and testis. Expressed in the brain, lungs, kidneys, uterus and seminal vesicles.

The protein resides in the nucleus. It localises to the chromosome. The catalysed reaction is N(6),N(6)-dimethyl-L-lysyl(9)-[histone H3] + S-adenosyl-L-methionine = N(6),N(6),N(6)-trimethyl-L-lysyl(9)-[histone H3] + S-adenosyl-L-homocysteine + H(+). Histone methyltransferase that specifically trimethylates 'Lys-9' of histone H3. H3 'Lys-9' trimethylation represents a specific tag for epigenetic transcriptional repression by recruiting HP1 (CBX1, CBX3 and/or CBX5) proteins to methylated histones. Mainly functions in euchromatin regions, thereby playing a central role in the silencing of euchromatic genes. H3 'Lys-9' trimethylation is coordinated with DNA methylation. Probably forms a complex with MBD1 and ATF7IP that represses transcription and couples DNA methylation and histone 'Lys-9' trimethylation. Its activity is dependent on MBD1 and is heritably maintained through DNA replication by being recruited by CAF-1. SETDB1 is targeted to histone H3 by TRIM28/TIF1B, a factor recruited by KRAB zinc-finger proteins. Probably forms a corepressor complex required for activated KRAS-mediated promoter hypermethylation and transcriptional silencing of tumor suppressor genes (TSGs) or other tumor-related genes in colorectal cancer (CRC) cells. Required to maintain a transcriptionally repressive state of genes in undifferentiated embryonic stem cells (ESCs). In ESCs, in collaboration with TRIM28, is also required for H3K9me3 and silencing of endogenous and introduced retroviruses in a DNA-methylation independent-pathway. Associates at promoter regions of tumor suppressor genes (TSGs) leading to their gene silencing. The SETDB1-TRIM28-ZNF274 complex may play a role in recruiting ATRX to the 3'-exons of zinc-finger coding genes with atypical chromatin signatures to establish or maintain/protect H3K9me3 at these transcriptionally active regions. The sequence is that of Histone-lysine N-methyltransferase SETDB1 from Mus musculus (Mouse).